The chain runs to 373 residues: Transmembrane protein adipocyte-associated 1 (373 aa).

Residues Asn11 and Asn23 are each glycosylated (N-linked (GlcNAc...) asparagine). Helical transmembrane passes span 48-68 (LLLLIPNVLFLIFLLWKLPSA), 76-96 (SSPIFITFYILVFVVALVGIA), 123-143 (FFLLAIELSVIILGLAFGHLE), 151-171 (VLAITTVLSLAYSVTQGTLEI), 192-212 (QFWLVSSCFFFLVYSLVVILP), 234-254 (ILALLNLLQGLGSVLLCFDII), and 265-285 (FLYFSFFAPLIYVAFLRGFFG). Asn361 carries an N-linked (GlcNAc...) asparagine glycan.

Belongs to the UPF0359 family. As to expression, ubiquitous, with higher levels in heart, placenta and kidney.

It is found in the membrane. The sequence is that of Transmembrane protein adipocyte-associated 1 (TPRA1) from Homo sapiens (Human).